We begin with the raw amino-acid sequence, 481 residues long: Mediator of RNA polymerase II transcription subunit 3 (481 aa).

Residues 79-107 (QEKFQMIRSKVLGLTERLQELSNDFEELQ) are a coiled coil. 2 disordered regions span residues 140–261 (AGAS…MGTP) and 415–463 (NTKG…KSAY). The span at 148–203 (TPTPAAATPTTAPTPGAGTKKAAKTAPTPTATATIGTPSNNAPTPATTATTPGTQA) shows a compositional bias: low complexity. Over residues 204–213 (KKPRKPRQTK) the composition is skewed to basic residues. Positions 214-248 (KQQQAAAAAAAVAQAQAQAQAQAQNQNQNNMQNKN) are enriched in low complexity. The segment covering 249–259 (ISNPGMNSNMG) has biased composition (polar residues). The span at 428–458 (MDQNQNQNQSQNQSQNQNQSMNMNMNNDSNN) shows a compositional bias: low complexity.

Belongs to the Mediator complex subunit 3 family. In terms of assembly, component of the Mediator complex.

The protein localises to the nucleus. Its function is as follows. Component of the Mediator complex, a coactivator involved in regulated gene transcription of nearly all RNA polymerase II-dependent genes. Mediator functions as a bridge to convey information from gene-specific regulatory proteins to the basal RNA polymerase II transcription machinery. Mediator is recruited to promoters by direct interactions with regulatory proteins and serves as a scaffold for the assembly of a functional preinitiation complex with RNA polymerase II and the general transcription factors. The polypeptide is Mediator of RNA polymerase II transcription subunit 3 (PGD1) (Candida glabrata (strain ATCC 2001 / BCRC 20586 / JCM 3761 / NBRC 0622 / NRRL Y-65 / CBS 138) (Yeast)).